Consider the following 184-residue polypeptide: Oligoribonuclease (184 aa).

Residues 8-171 form the Exonuclease domain; the sequence is LIWIDLEMTG…DDIRESIAEL (164 aa). The active site involves Tyr129.

Belongs to the oligoribonuclease family.

Its subcellular location is the cytoplasm. 3'-to-5' exoribonuclease specific for small oligoribonucleotides. This Pasteurella multocida (strain Pm70) protein is Oligoribonuclease.